A 578-amino-acid chain; its full sequence is SUMOylated effector protein AmpA (578 aa).

The interval 144-169 (PQTVDPSVVESATGSGVDTQEEQEID) is disordered. Repeat copies occupy residues 180–272 (TEEQ…SVEA), 304–425 (KEET…VSVE), and 428–557 (TEEP…MQQE). Residues 180–557 (TEEQEVILEE…VEADAGMQQE (378 aa)) are 3 X approximate tandem repeats. The disordered stretch occupies residues 516–578 (VSVEADAGMQ…DPDDEDVLSY (63 aa)).

Post-translationally, polysumoylated during infection on at least two lysine residues, in the N- and C-terminal section. SUMO2/3 modification of AmpA throughout the infection cycle is likely critical for bacterial intracellular survival, while terminal SUMO1 conjugation of AmpA may promote a late-stage infection cycle event. Only a small portion of the available AmpA pool is actually SUMOylated at any given time.

It localises to the secreted. Its subcellular location is the host membrane. It is found in the host cytoplasm. The protein resides in the host cytosol. Its function is as follows. Secreted effector that hijacks host cell SUMOylation during A.phagocytophilum infection and is important for the pathogen's intracellular survival. The chain is SUMOylated effector protein AmpA from Anaplasma phagocytophilum (strain HZ).